The sequence spans 300 residues: Protoheme IX farnesyltransferase (300 aa).

The next 9 helical transmembrane spans lie at 24 to 44 (VTQL…PGMV), 46 to 66 (WHVL…AFAI), 94 to 114 (PQIL…LYTF), 118 to 138 (LTMW…TLLL), 146 to 166 (IVIG…AVTG), 172 to 192 (AWIL…VLAL), 217 to 237 (LHIL…FISG), 239 to 259 (SGAV…AYAW), and 278 to 298 (IVYL…RPLL).

The protein belongs to the UbiA prenyltransferase family. Protoheme IX farnesyltransferase subfamily.

Its subcellular location is the cell inner membrane. It carries out the reaction heme b + (2E,6E)-farnesyl diphosphate + H2O = Fe(II)-heme o + diphosphate. It functions in the pathway porphyrin-containing compound metabolism; heme O biosynthesis; heme O from protoheme: step 1/1. In terms of biological role, converts heme B (protoheme IX) to heme O by substitution of the vinyl group on carbon 2 of heme B porphyrin ring with a hydroxyethyl farnesyl side group. In Burkholderia lata (strain ATCC 17760 / DSM 23089 / LMG 22485 / NCIMB 9086 / R18194 / 383), this protein is Protoheme IX farnesyltransferase.